The sequence spans 516 residues: D-aminopeptidase (516 aa).

The Nucleophile role is filled by S61. The active-site Proton donor/acceptor is K64. Residues 476-486 form an important for specificity region; the sequence is RRSMDAPAPGD. D480 contributes to the substrate binding site.

Belongs to the peptidase S12 family. As to quaternary structure, homodimer.

It carries out the reaction Release of an N-terminal D-amino acid from a peptide, Xaa-|-Yaa-, in which Xaa is preferably D-Ala, D-Ser or D-Thr. D-amino acid amides and methyl esters also are hydrolyzed, as is glycine amide.. Inhibited by beta-lactam compounds such as 6-aminopenicillic acid, 7-aminocephalosporanic acid, benzylpenicillin and ampicillin. Inhibited by p-chloromercuribenzoate. Hydrolyzes N-terminal residues in D-amino acid-containing peptides. The chain is D-aminopeptidase from Cereibacter sphaeroides (strain KD131 / KCTC 12085) (Rhodobacter sphaeroides).